Reading from the N-terminus, the 481-residue chain is Pyruvate kinase (481 aa).

Position 36 (R36) interacts with substrate. Residues N38, S40, and D70 each coordinate K(+). Residue 38 to 41 (NFSH) participates in ATP binding. Residues R77 and K160 each coordinate ATP. E225 lines the Mg(2+) pocket. Residues G251, D252, and T284 each coordinate substrate. A Mg(2+)-binding site is contributed by D252.

Belongs to the pyruvate kinase family. In terms of assembly, homotetramer. Mg(2+) serves as cofactor. It depends on K(+) as a cofactor.

It catalyses the reaction pyruvate + ATP = phosphoenolpyruvate + ADP + H(+). It participates in carbohydrate degradation; glycolysis; pyruvate from D-glyceraldehyde 3-phosphate: step 5/5. With respect to regulation, allosterically activated by AMP and by several sugar phosphates. Belongs to type II PK. In Buchnera aphidicola subsp. Schizaphis graminum (strain Sg), this protein is Pyruvate kinase (pykA).